Reading from the N-terminus, the 359-residue chain is Peptide chain release factor 1 (359 aa).

Glutamine 233 is modified (N5-methylglutamine).

The protein belongs to the prokaryotic/mitochondrial release factor family. Methylated by PrmC. Methylation increases the termination efficiency of RF1.

It localises to the cytoplasm. Peptide chain release factor 1 directs the termination of translation in response to the peptide chain termination codons UAG and UAA. This Cytophaga hutchinsonii (strain ATCC 33406 / DSM 1761 / CIP 103989 / NBRC 15051 / NCIMB 9469 / D465) protein is Peptide chain release factor 1.